A 721-amino-acid chain; its full sequence is Polyribonucleotide nucleotidyltransferase (721 aa).

Residues Asp-511 and Asp-517 each contribute to the Mg(2+) site. Residues 577–637 form the KH domain; that stretch reads PSTDFFHINP…SGVQAAREHI (61 aa). The S1 motif domain occupies 654–721; the sequence is GDIHKGIVKK…KGNKISLGIA (68 aa).

It belongs to the polyribonucleotide nucleotidyltransferase family. Mg(2+) serves as cofactor.

Its subcellular location is the cytoplasm. The enzyme catalyses RNA(n+1) + phosphate = RNA(n) + a ribonucleoside 5'-diphosphate. Functionally, involved in mRNA degradation. Catalyzes the phosphorolysis of single-stranded polyribonucleotides processively in the 3'- to 5'-direction. This chain is Polyribonucleotide nucleotidyltransferase, found in Sulfurimonas denitrificans (strain ATCC 33889 / DSM 1251) (Thiomicrospira denitrificans (strain ATCC 33889 / DSM 1251)).